A 92-amino-acid polypeptide reads, in one-letter code: Alpha-elapitoxin-As2a (92 aa).

An N-terminal signal peptide occupies residues 1–21 (MKTLLLTLVVVTIVCLDLGDG). 5 disulfides stabilise this stretch: Cys24/Cys41, Cys34/Cys62, Cys47/Cys51, Cys66/Cys77, and Cys78/Cys83.

It belongs to the three-finger toxin family. Long-chain subfamily. Type II alpha-neurotoxin sub-subfamily. As to expression, expressed by the venom gland.

It localises to the secreted. Its function is as follows. Binds with high affinity to muscular (alpha-1/CHRNA1) and neuronal (alpha-7/CHRNA7) nicotinic acetylcholine receptor (nAChR) and inhibits acetylcholine from binding to the receptor, thereby impairing neuromuscular and neuronal transmission. In Austrelaps superbus (Lowland copperhead snake), this protein is Alpha-elapitoxin-As2a.